Consider the following 148-residue polypeptide: MDKYTIRQLFMYLSDNQYVYCRKCIFTPLRGDLNDCKNCPQSYSKNKDIIWFLTPPTTPTNYYNYLKDSHDYKQSCIETRVIVDFCVWCSLTNTMRTKNILNEFFKTYKNGTLHSSTKLNVIDTMNDLGFFNNNFKLIDEDASEFENY.

This is an uncharacterized protein from Acheta domesticus (House cricket).